Consider the following 37-residue polypeptide: Large ribosomal subunit protein bL36 (37 aa).

It belongs to the bacterial ribosomal protein bL36 family.

The polypeptide is Large ribosomal subunit protein bL36 (Persephonella marina (strain DSM 14350 / EX-H1)).